Reading from the N-terminus, the 405-residue chain is Arginine biosynthesis bifunctional protein ArgJ (405 aa).

T152, K178, T189, E276, N400, and T405 together coordinate substrate. T189 acts as the Nucleophile in catalysis.

This sequence belongs to the ArgJ family. Heterotetramer of two alpha and two beta chains.

It localises to the cytoplasm. It catalyses the reaction N(2)-acetyl-L-ornithine + L-glutamate = N-acetyl-L-glutamate + L-ornithine. It carries out the reaction L-glutamate + acetyl-CoA = N-acetyl-L-glutamate + CoA + H(+). Its pathway is amino-acid biosynthesis; L-arginine biosynthesis; L-ornithine and N-acetyl-L-glutamate from L-glutamate and N(2)-acetyl-L-ornithine (cyclic): step 1/1. It participates in amino-acid biosynthesis; L-arginine biosynthesis; N(2)-acetyl-L-ornithine from L-glutamate: step 1/4. In terms of biological role, catalyzes two activities which are involved in the cyclic version of arginine biosynthesis: the synthesis of N-acetylglutamate from glutamate and acetyl-CoA as the acetyl donor, and of ornithine by transacetylation between N(2)-acetylornithine and glutamate. The chain is Arginine biosynthesis bifunctional protein ArgJ from Pseudomonas aeruginosa (strain ATCC 15692 / DSM 22644 / CIP 104116 / JCM 14847 / LMG 12228 / 1C / PRS 101 / PAO1).